The chain runs to 232 residues: NAD(P)H-hydrate epimerase (232 aa).

The YjeF N-terminal domain occupies 9-219 (AISVDEELFN…KLQDKYAMEL (211 aa)). Position 62–66 (62–66 (NNGGD)) interacts with (6S)-NADPHX. 2 residues coordinate K(+): N63 and D127. Residues 131 to 137 (GFSFKPP) and D160 contribute to the (6S)-NADPHX site. S163 contacts K(+).

It belongs to the NnrE/AIBP family. K(+) is required as a cofactor.

It catalyses the reaction (6R)-NADHX = (6S)-NADHX. It carries out the reaction (6R)-NADPHX = (6S)-NADPHX. Catalyzes the epimerization of the S- and R-forms of NAD(P)HX, a damaged form of NAD(P)H that is a result of enzymatic or heat-dependent hydration. This is a prerequisite for the S-specific NAD(P)H-hydrate dehydratase to allow the repair of both epimers of NAD(P)HX. This Aedes aegypti (Yellowfever mosquito) protein is NAD(P)H-hydrate epimerase.